A 131-amino-acid chain; its full sequence is Profilin-10 (131 aa).

Cysteine 13 and cysteine 115 are joined by a disulfide. The short motif at alanine 81–threonine 97 is the Involved in PIP2 interaction element. Threonine 111 is subject to Phosphothreonine.

This sequence belongs to the profilin family. Occurs in many kinds of cells as a complex with monomeric actin in a 1:1 ratio. In terms of processing, phosphorylated by MAP kinases.

It localises to the cytoplasm. The protein resides in the cytoskeleton. In terms of biological role, binds to actin and affects the structure of the cytoskeleton. At high concentrations, profilin prevents the polymerization of actin, whereas it enhances it at low concentrations. The sequence is that of Profilin-10 from Phleum pratense (Common timothy).